The following is a 332-amino-acid chain: MSRARRVLCRACLALAAVLAVLLLLPLPLPLPLPRAPAPDPDRVPTRSLTLEGDRLQPDDVFIAVKTTRKNHGPRLRLLLRTWISRAPRQTFIFTDGDDPELQMLAGGRMINTNCSAVRTRQALCCKMSVEYDKFLESGRKWFCHVDDDNYVNPKSLLHLLSTFSSNQDIYLGRPSLDHPIEATERVQGGGTSNTVKFWFATGGAGFCLSRGLALKMSPWASLGSFMSTAERVRLPDDCTVGYIVEGLLGARLLHSPLFHSHLENLQRLPSGAILQQVTLSYGGPENPHNVVNVAGSFNIQQDPTRFQSVHCLLYPDTHWCPMKNRVEGAFQ.

Residues 1 to 6 (MSRARR) lie on the Cytoplasmic side of the membrane. The chain crosses the membrane as a helical; Signal-anchor for type II membrane protein span at residues 7–29 (VLCRACLALAAVLAVLLLLPLPL). Topologically, residues 30-332 (PLPLPRAPAP…MKNRVEGAFQ (303 aa)) are lumenal. R75 contributes to the substrate binding site. N114 is a glycosylation site (N-linked (GlcNAc...) asparagine). Disulfide bonds link C115–C126 and C144–C208. D148 lines the substrate pocket. D149 contributes to the Mn(2+) binding site. D238 is an active-site residue. Residue H262 coordinates Mn(2+). C312 and C321 are oxidised to a cystine.

Belongs to the glycosyltransferase 31 family. The cofactor is Mn(2+). In terms of tissue distribution, detected in all the examined tissues (12.5 dpc). High expression found in adult brain.

The protein localises to the golgi apparatus membrane. The catalysed reaction is 3-O-(alpha-L-fucosyl)-L-threonyl-[EGF-like domain protein] + UDP-N-acetyl-alpha-D-glucosamine = 3-O-(N-acetyl-beta-D-glucosaminyl-(1-&gt;3)-alpha-L-fucosyl)-L-threonyl-[EGF-like domain protein] + UDP + H(+). The enzyme catalyses 3-O-(alpha-L-fucosyl)-L-seryl-[EGF-like domain protein] + UDP-N-acetyl-alpha-D-glucosamine = 3-O-(N-acetyl-beta-D-glucosaminyl-(1-&gt;3)-alpha-L-fucosyl)-L-seryl-[EGF-like domain protein] + UDP + H(+). Its function is as follows. Glycosyltransferase that initiates the elongation of O-linked fucose residues attached to EGF-like repeats in the extracellular domain of Notch molecules. Modulates NOTCH1 activity by modifying O-fucose residues at specific EGF-like domains resulting in enhancement of NOTCH1 activation by DLL1 and JAG1. May be involved in limb formation and in neurogenesis. The chain is Beta-1,3-N-acetylglucosaminyltransferase radical fringe from Mus musculus (Mouse).